Here is a 168-residue protein sequence, read N- to C-terminus: Group IIF secretory phospholipase A2 (168 aa).

The N-terminal stretch at 1–20 is a signal peptide; the sequence is MKKFFAIAVLAGSVVTTAHS. Intrachain disulfides connect Cys-46–Cys-138, Cys-48–Cys-64, Cys-63–Cys-120, Cys-69–Cys-145, Cys-70–Cys-113, Cys-79–Cys-106, and Cys-98–Cys-111. Residues Tyr-47, Gly-49, and Gly-51 each contribute to the Ca(2+) site. Residue His-67 is part of the active site. Residue Asp-68 coordinates Ca(2+). Residues Asn-92 and Asn-102 are each glycosylated (N-linked (GlcNAc...) asparagine). Asp-114 is an active-site residue. The segment at 139 to 168 is required for localization on the plasma membrane; it reads QGPTPNCSIYDPYPEEVTCGHGLPATPVST. Asn-144 is a glycosylation site (N-linked (GlcNAc...) asparagine).

The protein belongs to the phospholipase A2 family. Requires Ca(2+) as cofactor. Strongly expressed in testis.

It is found in the secreted. Its subcellular location is the cell membrane. The enzyme catalyses a 1,2-diacyl-sn-glycero-3-phosphocholine + H2O = a 1-acyl-sn-glycero-3-phosphocholine + a fatty acid + H(+). It catalyses the reaction 1-hexadecanoyl-2-(9Z-octadecenoyl)-sn-glycero-3-phospho-(1'-sn-glycerol) + H2O = 1-hexadecanoyl-sn-glycero-3-phospho-(1'-sn-glycerol) + (9Z)-octadecenoate + H(+). The catalysed reaction is 1-hexadecanoyl-2-(9Z,12Z-octadecadienoyl)-sn-glycero-3-phosphoethanolamine + H2O = 1-hexadecanoyl-sn-glycero-3-phosphoethanolamine + (9Z,12Z)-octadecadienoate + H(+). It carries out the reaction 1-hexadecanoyl-2-(5Z,8Z,11Z,14Z-eicosatetraenoyl)-sn-glycero-3-phosphoethanolamine + H2O = 1-hexadecanoyl-sn-glycero-3-phosphoethanolamine + (5Z,8Z,11Z,14Z)-eicosatetraenoate + H(+). The enzyme catalyses 1-hexadecanoyl-2-(9Z-octadecenoyl)-sn-glycero-3-phosphocholine + H2O = 1-hexadecanoyl-sn-glycero-3-phosphocholine + (9Z)-octadecenoate + H(+). It catalyses the reaction 1-hexadecanoyl-2-(9Z-octadecenoyl)-sn-glycero-3-phospho-L-serine + H2O = 1-hexadecanoyl-sn-glycero-3-phospho-L-serine + (9Z)-octadecenoate + H(+). Secretory calcium-dependent phospholipase A2 that primarily targets extracellular phospholipids. Hydrolyzes the ester bond of the fatty acyl group attached at the sn-2 position of phospholipids (phospholipase A2 activity), the catalytic efficiency decreasing in the following order: phosphatidylglycerols &gt; phosphatidylethanolamines &gt; phosphatidylcholines &gt; phosphatidylserines. May play a role in lipid mediator production in inflammatory conditions, by providing arachidonic acid to downstream cyclooxygenases and lipoxygenases. This Mus musculus (Mouse) protein is Group IIF secretory phospholipase A2 (Pla2g2f).